Consider the following 436-residue polypeptide: Histidinol dehydrogenase (436 aa).

NAD(+) is bound by residues Tyr-135, Gln-196, and Asn-219. Residues Ser-242, Gln-264, and His-267 each coordinate substrate. Residues Gln-264 and His-267 each contribute to the Zn(2+) site. Residues Glu-332 and His-333 each act as proton acceptor in the active site. Substrate-binding residues include His-333, Asp-366, Glu-420, and His-425. Asp-366 contacts Zn(2+). His-425 serves as a coordination point for Zn(2+).

It belongs to the histidinol dehydrogenase family. Zn(2+) serves as cofactor.

The catalysed reaction is L-histidinol + 2 NAD(+) + H2O = L-histidine + 2 NADH + 3 H(+). It functions in the pathway amino-acid biosynthesis; L-histidine biosynthesis; L-histidine from 5-phospho-alpha-D-ribose 1-diphosphate: step 9/9. In terms of biological role, catalyzes the sequential NAD-dependent oxidations of L-histidinol to L-histidinaldehyde and then to L-histidine. The chain is Histidinol dehydrogenase from Methylococcus capsulatus (strain ATCC 33009 / NCIMB 11132 / Bath).